Consider the following 62-residue polypeptide: Probable tautomerase RSc0807 (62 aa).

Residue Pro-2 is the Proton acceptor; via imino nitrogen of the active site.

It belongs to the 4-oxalocrotonate tautomerase family.

This chain is Probable tautomerase RSc0807, found in Ralstonia nicotianae (strain ATCC BAA-1114 / GMI1000) (Ralstonia solanacearum).